An 86-amino-acid polypeptide reads, in one-letter code: RNA-binding protein Hfq (86 aa).

A Sm domain is found at 9–68; that stretch reads DPYLNTLRKEKVPVSIYLVNGIKLQGSIESFDQFVVLLKNTVSQMVYKHAISTVVPARPV. Positions 66–86 are disordered; sequence RPVRLPSPTDSEHGDSEPGNA. A compositionally biased stretch (basic and acidic residues) spans 75–86; that stretch reads DSEHGDSEPGNA.

This sequence belongs to the Hfq family. As to quaternary structure, homohexamer.

RNA chaperone that binds small regulatory RNA (sRNAs) and mRNAs to facilitate mRNA translational regulation in response to envelope stress, environmental stress and changes in metabolite concentrations. Also binds with high specificity to tRNAs. The chain is RNA-binding protein Hfq from Pseudomonas putida (strain ATCC 700007 / DSM 6899 / JCM 31910 / BCRC 17059 / LMG 24140 / F1).